Here is a 223-residue protein sequence, read N- to C-terminus: Deoxyribose-phosphate aldolase (223 aa).

The active-site Proton donor/acceptor is the aspartate 92. Lysine 154 serves as the catalytic Schiff-base intermediate with acetaldehyde. Lysine 182 serves as the catalytic Proton donor/acceptor.

It belongs to the DeoC/FbaB aldolase family. DeoC type 1 subfamily.

It is found in the cytoplasm. The catalysed reaction is 2-deoxy-D-ribose 5-phosphate = D-glyceraldehyde 3-phosphate + acetaldehyde. The protein operates within carbohydrate degradation; 2-deoxy-D-ribose 1-phosphate degradation; D-glyceraldehyde 3-phosphate and acetaldehyde from 2-deoxy-alpha-D-ribose 1-phosphate: step 2/2. Its function is as follows. Catalyzes a reversible aldol reaction between acetaldehyde and D-glyceraldehyde 3-phosphate to generate 2-deoxy-D-ribose 5-phosphate. The polypeptide is Deoxyribose-phosphate aldolase (Haemophilus influenzae (strain ATCC 51907 / DSM 11121 / KW20 / Rd)).